An 816-amino-acid chain; its full sequence is Leucine--tRNA ligase (816 aa).

Residues 40-51 (SYPSGSQLHAGH) carry the 'HIGH' region motif. A 'KMSKS' region motif is present at residues 576-580 (KMSKS). Lys-579 is a binding site for ATP.

It belongs to the class-I aminoacyl-tRNA synthetase family.

Its subcellular location is the cytoplasm. It catalyses the reaction tRNA(Leu) + L-leucine + ATP = L-leucyl-tRNA(Leu) + AMP + diphosphate. The polypeptide is Leucine--tRNA ligase (Clostridium perfringens (strain 13 / Type A)).